The following is a 284-amino-acid chain: Shikimate dehydrogenase (NADP(+)) (284 aa).

Shikimate is bound by residues 19 to 21 (SFS) and threonine 66. Residue lysine 70 is the Proton acceptor of the active site. Residue aspartate 82 participates in NADP(+) binding. The shikimate site is built by asparagine 91 and aspartate 106. Residues 130–134 (GSGGS) and isoleucine 226 each bind NADP(+). Residue tyrosine 228 coordinates shikimate. Residue glycine 249 coordinates NADP(+).

Belongs to the shikimate dehydrogenase family. In terms of assembly, homodimer.

The catalysed reaction is shikimate + NADP(+) = 3-dehydroshikimate + NADPH + H(+). Its pathway is metabolic intermediate biosynthesis; chorismate biosynthesis; chorismate from D-erythrose 4-phosphate and phosphoenolpyruvate: step 4/7. Involved in the biosynthesis of the chorismate, which leads to the biosynthesis of aromatic amino acids. Catalyzes the reversible NADPH linked reduction of 3-dehydroshikimate (DHSA) to yield shikimate (SA). The protein is Shikimate dehydrogenase (NADP(+)) of Methanococcus vannielii (strain ATCC 35089 / DSM 1224 / JCM 13029 / OCM 148 / SB).